A 123-amino-acid chain; its full sequence is Defensin beta 118 (123 aa).

The N-terminal stretch at 1–19 is a signal peptide; it reads MKLLLLALPMLVLLPQVIP. Disulfide bonds link C27–C54, C34–C48, and C38–C55. 2 disordered regions span residues 59–79 and 102–123; these read NEDH…STPG and MVEE…HHSS. A propeptide spanning residues 64 to 123 is cleaved from the precursor; the sequence is QVPTTSPTPLSDSTPGSIDDILTVRFTTDYFEVSSKKDMVEESEAGWGTQTSLPDVHHSS. The span at 66–79 shows a compositional bias: low complexity; the sequence is PTTSPTPLSDSTPG.

It belongs to the beta-defensin family. The three-dimensional structure formed by the three intramolecular disulfide bridges is indispensable for antimicrobial activity.

Its subcellular location is the secreted. Host defense peptide that exhibits antimicrobial activity against both Gram-negative bacteria, such as E.coli and S.typhimurium, and Gram-positive bacteria, such as S.aureus and B.subtilis. Inhibits cell adhesion of E.coli on intestinal epithelial enterocytes. Causes rapid permeabilization of both the outer and inner membrane of E.coli, leading to morphological alterations on the bacterial surface. Binds to bacterial lipopolysaccharides (LPS) with high affinity, and may thereby be involved in immunoregulation through LPS neutralization. May contribute to epididymal innate immunity and protect the sperm against attack by microorganisms. In Hylobates lar (Lar gibbon), this protein is Defensin beta 118 (DEFB118).